Reading from the N-terminus, the 256-residue chain is uncharacterized protein (256 aa).

A signal peptide spans 1–24 (MIKRVNKLVLGISLLFLVISIAAG). The N-palmitoyl cysteine moiety is linked to residue cysteine 25. A lipid anchor (S-diacylglycerol cysteine) is attached at cysteine 25.

Belongs to the staphylococcal tandem lipoprotein family.

The protein resides in the cell membrane. This is an uncharacterized protein from Staphylococcus aureus.